The sequence spans 625 residues: tRNA uridine 5-carboxymethylaminomethyl modification enzyme MnmG (625 aa).

FAD-binding positions include 9-14, Val121, and Ser177; that span reads GGGHAG. Position 271–285 (271–285) interacts with NAD(+); sequence GPRYCPSIEDKVNRF. Position 368 (Gln368) interacts with FAD.

It belongs to the MnmG family. As to quaternary structure, homodimer. Heterotetramer of two MnmE and two MnmG subunits. Requires FAD as cofactor.

The protein resides in the cytoplasm. NAD-binding protein involved in the addition of a carboxymethylaminomethyl (cmnm) group at the wobble position (U34) of certain tRNAs, forming tRNA-cmnm(5)s(2)U34. The polypeptide is tRNA uridine 5-carboxymethylaminomethyl modification enzyme MnmG (Aliarcobacter butzleri (strain RM4018) (Arcobacter butzleri)).